We begin with the raw amino-acid sequence, 504 residues long: Activin receptor type-1-like (504 aa).

The signal sequence occupies residues 1-20; sequence MTLGIFRRVFLMLSVALGLT. The Extracellular portion of the chain corresponds to 21–121; that stretch reads KGDLVKPSRG…EEPEVDAHLP (101 aa). Residue N34 is glycosylated (N-linked (GlcNAc...) asparagine). Disulfide bonds link C35/C52, C37/C42, and C47/C70. A mediates specificity for BMP ligand region spans residues 74-77; it reads NQEL. 2 disulfide bridges follow: C78/C90 and C91/C96. An N-linked (GlcNAc...) asparagine glycan is attached at N99. Residues 122 to 142 form a helical membrane-spanning segment; that stretch reads LILGPVLALLVLVALGTLGLW. The Cytoplasmic portion of the chain corresponds to 143–504; sequence RVRRRQEKQR…QNPEKPKVIH (362 aa). S156, S161, and S162 each carry phosphoserine. Residues 173-202 form the GS domain; it reads SMLGDFLVSDCTTGSGSGLPFLVQRTVARQ. Positions 203–504 constitute a Protein kinase domain; sequence VALVECVGKG…QNPEKPKVIH (302 aa). Residues 209-217 and K230 each bind ATP; that span reads VGKGRYGEV. D331 acts as the Proton acceptor in catalysis.

It belongs to the protein kinase superfamily. TKL Ser/Thr protein kinase family. TGFB receptor subfamily. As to quaternary structure, interacts with TSC22D1/TSC-22. It depends on Mg(2+) as a cofactor. Mn(2+) serves as cofactor. As to expression, urogenital ridge, testis, ovary, brain and lung. In lung, found exclusively in pulmonary vessels of all sizes. Also expressed in aorta, vena cava and certain blood vessels of kidney, spleen, heart and intestine. For most blood vessels, a higher level of expression is found in endothelium than in adjacent smooth muscle.

Its subcellular location is the cell membrane. The enzyme catalyses L-threonyl-[receptor-protein] + ATP = O-phospho-L-threonyl-[receptor-protein] + ADP + H(+). The catalysed reaction is L-seryl-[receptor-protein] + ATP = O-phospho-L-seryl-[receptor-protein] + ADP + H(+). Its function is as follows. Type I receptor for TGF-beta family ligands BMP9/GDF2 and BMP10 and important regulator of normal blood vessel development. On ligand binding, forms a receptor complex consisting of two type II and two type I transmembrane serine/threonine kinases. Type II receptors phosphorylate and activate type I receptors which autophosphorylate, then bind and activate SMAD transcriptional regulators. May bind activin as well. This is Activin receptor type-1-like (Acvrl1) from Rattus norvegicus (Rat).